A 461-amino-acid polypeptide reads, in one-letter code: Fumarate hydratase class II (461 aa).

Substrate contacts are provided by residues 97-99, 127-130, 137-139, and Thr-185; these read SGT, HPND, and SSN. Residue His-186 is the Proton donor/acceptor of the active site. Ser-316 is an active-site residue. Substrate is bound by residues Ser-317 and 322-324; that span reads KVN.

The protein belongs to the class-II fumarase/aspartase family. Fumarase subfamily. In terms of assembly, homotetramer.

The protein localises to the cytoplasm. It catalyses the reaction (S)-malate = fumarate + H2O. It participates in carbohydrate metabolism; tricarboxylic acid cycle; (S)-malate from fumarate: step 1/1. Its function is as follows. Involved in the TCA cycle. Catalyzes the stereospecific interconversion of fumarate to L-malate. This chain is Fumarate hydratase class II, found in Staphylococcus saprophyticus subsp. saprophyticus (strain ATCC 15305 / DSM 20229 / NCIMB 8711 / NCTC 7292 / S-41).